The sequence spans 311 residues: Dihydroorotate dehydrogenase A (fumarate) (311 aa).

Residues S19 and 43–44 contribute to the FMN site; that span reads KS. Substrate is bound by residues K43, 67–71, and N127; that span reads NSMGL. FMN is bound at residue N127. C130 functions as the Nucleophile in the catalytic mechanism. FMN is bound by residues K164 and V192. 193–194 serves as a coordination point for substrate; the sequence is NS. FMN contacts are provided by residues G221, 249 to 250, and 271 to 272; these read GG and GT.

This sequence belongs to the dihydroorotate dehydrogenase family. Type 1 subfamily. As to quaternary structure, homodimer. FMN is required as a cofactor.

The protein localises to the cytoplasm. The catalysed reaction is (S)-dihydroorotate + fumarate = orotate + succinate. Its pathway is pyrimidine metabolism; UMP biosynthesis via de novo pathway. Catalyzes the conversion of dihydroorotate to orotate with fumarate as the electron acceptor. The protein is Dihydroorotate dehydrogenase A (fumarate) (pyrDA) of Lactococcus lactis subsp. cremoris (Streptococcus cremoris).